The primary structure comprises 162 residues: 3-hydroxyacyl-[acyl-carrier-protein] dehydratase FabZ (162 aa).

Histidine 49 is an active-site residue.

The protein belongs to the thioester dehydratase family. FabZ subfamily.

The protein localises to the cytoplasm. The enzyme catalyses a (3R)-hydroxyacyl-[ACP] = a (2E)-enoyl-[ACP] + H2O. In terms of biological role, involved in unsaturated fatty acids biosynthesis. Catalyzes the dehydration of short chain beta-hydroxyacyl-ACPs and long chain saturated and unsaturated beta-hydroxyacyl-ACPs. The polypeptide is 3-hydroxyacyl-[acyl-carrier-protein] dehydratase FabZ (Solibacter usitatus (strain Ellin6076)).